Here is a 409-residue protein sequence, read N- to C-terminus: Peptidase T (409 aa).

Zn(2+) is bound at residue His78. Residue Asp80 is part of the active site. Asp140 is a Zn(2+) binding site. Glu174 functions as the Proton acceptor in the catalytic mechanism. Glu175, Asp197, and His379 together coordinate Zn(2+).

It belongs to the peptidase M20B family. Zn(2+) serves as cofactor.

Its subcellular location is the cytoplasm. It carries out the reaction Release of the N-terminal residue from a tripeptide.. Its function is as follows. Cleaves the N-terminal amino acid of tripeptides. The chain is Peptidase T from Photobacterium profundum (strain SS9).